The following is a 117-amino-acid chain: NADH-ubiquinone oxidoreductase chain 3 (117 aa).

3 helical membrane-spanning segments follow: residues 4–24 (ILIY…LGLI), 57–77 (FFLL…LLPL), and 88–108 (WPLT…FHEW).

Belongs to the complex I subunit 3 family.

It localises to the mitochondrion membrane. It catalyses the reaction a ubiquinone + NADH + 5 H(+)(in) = a ubiquinol + NAD(+) + 4 H(+)(out). Functionally, core subunit of the mitochondrial membrane respiratory chain NADH dehydrogenase (Complex I) that is believed to belong to the minimal assembly required for catalysis. Complex I functions in the transfer of electrons from NADH to the respiratory chain. The immediate electron acceptor for the enzyme is believed to be ubiquinone. This chain is NADH-ubiquinone oxidoreductase chain 3 (ND3), found in Heterololigo bleekeri (Spear squid).